The primary structure comprises 219 residues: Protein-L-isoaspartate O-methyltransferase 2 (219 aa).

The active site involves Ser60.

This sequence belongs to the methyltransferase superfamily. L-isoaspartyl/D-aspartyl protein methyltransferase family.

It localises to the cytoplasm. It carries out the reaction [protein]-L-isoaspartate + S-adenosyl-L-methionine = [protein]-L-isoaspartate alpha-methyl ester + S-adenosyl-L-homocysteine. Functionally, catalyzes the methyl esterification of L-isoaspartyl residues in peptides and proteins that result from spontaneous decomposition of normal L-aspartyl and L-asparaginyl residues. It plays a role in the repair and/or degradation of damaged proteins. This Archaeoglobus fulgidus (strain ATCC 49558 / DSM 4304 / JCM 9628 / NBRC 100126 / VC-16) protein is Protein-L-isoaspartate O-methyltransferase 2 (pcm2).